The sequence spans 232 residues: 2,3,4,5-tetrahydropyridine-2,6-dicarboxylate N-acetyltransferase (232 aa).

It belongs to the transferase hexapeptide repeat family. DapH subfamily.

It carries out the reaction (S)-2,3,4,5-tetrahydrodipicolinate + acetyl-CoA + H2O = L-2-acetamido-6-oxoheptanedioate + CoA. It functions in the pathway amino-acid biosynthesis; L-lysine biosynthesis via DAP pathway; LL-2,6-diaminopimelate from (S)-tetrahydrodipicolinate (acetylase route): step 1/3. In terms of biological role, catalyzes the transfer of an acetyl group from acetyl-CoA to tetrahydrodipicolinate. This is 2,3,4,5-tetrahydropyridine-2,6-dicarboxylate N-acetyltransferase from Streptococcus pneumoniae serotype 4 (strain ATCC BAA-334 / TIGR4).